The primary structure comprises 789 residues: MPAKGPLTPQQLSLINRYWRAANYLSVGQIYLMKNPLLREPLQPEHIKPRLLGHWGTTPGLNFIYAHLNRIIQQRNANVIYICGPGHGGPGMVANTYLEGTYSEIYPAISEDEAGMERLFRQFSFPGGIPSHAAPETPGSIHEGGELGYALVHAYGAAFDNPDLVVACVVGDGEAETGALATSWHSNKFLNPARDGAVLPILHLNGYKIANPTVLARLSDDDLDNLFRGYGYEPFFVEGSEPADMHQKMAATLDTIFQRIQDIKKNADVHSPERPRWPMIILRSPKGWTGPKTVDGLVVENYWRAHQVPVANCRENDAHRKILEDWMKSYDPSDLFDEKGALKPELRALAPKGEARIGANPHANGGLLRKELHMPDFRQYAVNVTEPGAIEAQSTKILGDFLRDVMKLNETEKNFRIFGPDETASNRLGSVLEATNRVWMAETLDMDDHLAADGRVMEVLSEHLCQGWLEGYLLSGRHGFFSCYEAFIHIIDSMFNQHAKWLQVARELEWRKPISSLNYLLTSHVWRQDHNGFSHQDPGFVDLVANKSADIVRVYFPPDANTLLWVGDHCLKTWNRVNVIVAGKQPEPQWLTMAEAEKHCEAGLGIWEWAGTEDGLEPDIVMACAGDVPTMETLAAVDLLRQSLPHLRIRVVNVVDLMVLQSPHQHPHGISDEEFDRMFTTNRPVIFAYHGYPYLIHRLVYKRTNHSNFHVRGFIEQGTTTTPFDMTVLNELDRFHLAMEAVERLPLGESVAKPLIDNFTEKLALHKDYIRQHGEDMPEIRDWKWTWPR.

This sequence belongs to the XFP family. The cofactor is thiamine diphosphate.

The polypeptide is Probable phosphoketolase (xfp) (Brucella suis biovar 1 (strain 1330)).